Consider the following 698-residue polypeptide: Polyribonucleotide nucleotidyltransferase (698 aa).

2 residues coordinate Mg(2+): aspartate 488 and aspartate 494. The KH domain maps to 555–614 (PRLLTIRIDPDKIRDVIGKGGATIRALTEETGTTIDISDDGKVTIASADKAAADEARRRI). Positions 624–692 (GTVYEGKVSK…RQGRIRLSMK (69 aa)) constitute an S1 motif domain.

Belongs to the polyribonucleotide nucleotidyltransferase family. As to quaternary structure, component of the RNA degradosome, which is a multiprotein complex involved in RNA processing and mRNA degradation. It depends on Mg(2+) as a cofactor.

The protein localises to the cytoplasm. The catalysed reaction is RNA(n+1) + phosphate = RNA(n) + a ribonucleoside 5'-diphosphate. Functionally, involved in mRNA degradation. Catalyzes the phosphorolysis of single-stranded polyribonucleotides processively in the 3'- to 5'-direction. The polypeptide is Polyribonucleotide nucleotidyltransferase (Alkalilimnicola ehrlichii (strain ATCC BAA-1101 / DSM 17681 / MLHE-1)).